Consider the following 182-residue polypeptide: Ribosome-recycling factor (182 aa).

A disordered region spans residues 136 to 156; that stretch reads IRKQEKNSDISKDESRDLQDK.

The protein belongs to the RRF family.

The protein resides in the cytoplasm. Functionally, responsible for the release of ribosomes from messenger RNA at the termination of protein biosynthesis. May increase the efficiency of translation by recycling ribosomes from one round of translation to another. This chain is Ribosome-recycling factor, found in Trichodesmium erythraeum (strain IMS101).